We begin with the raw amino-acid sequence, 207 residues long: Large ribosomal subunit protein uL4 (207 aa).

Positions 49–78 (HAVKNRSAVRGGGRKPWRQKGTGRARQGSI) are disordered. The span at 60–71 (GGRKPWRQKGTG) shows a compositional bias: basic residues.

It belongs to the universal ribosomal protein uL4 family. As to quaternary structure, part of the 50S ribosomal subunit.

Functionally, one of the primary rRNA binding proteins, this protein initially binds near the 5'-end of the 23S rRNA. It is important during the early stages of 50S assembly. It makes multiple contacts with different domains of the 23S rRNA in the assembled 50S subunit and ribosome. Forms part of the polypeptide exit tunnel. The chain is Large ribosomal subunit protein uL4 from Enterococcus faecalis (strain ATCC 700802 / V583).